The chain runs to 944 residues: Bifunctional glutamine synthetase adenylyltransferase/adenylyl-removing enzyme (944 aa).

Residues 1–440 (MSANSVFQQL…IFTQLIGEDD (440 aa)) form an adenylyl removase region. An adenylyl transferase region spans residues 448–944 (VSEFKRLWLL…LSSKQKWLDE (497 aa)).

Belongs to the GlnE family. Requires Mg(2+) as cofactor.

It carries out the reaction [glutamine synthetase]-O(4)-(5'-adenylyl)-L-tyrosine + phosphate = [glutamine synthetase]-L-tyrosine + ADP. The catalysed reaction is [glutamine synthetase]-L-tyrosine + ATP = [glutamine synthetase]-O(4)-(5'-adenylyl)-L-tyrosine + diphosphate. Involved in the regulation of glutamine synthetase GlnA, a key enzyme in the process to assimilate ammonia. When cellular nitrogen levels are high, the C-terminal adenylyl transferase (AT) inactivates GlnA by covalent transfer of an adenylyl group from ATP to specific tyrosine residue of GlnA, thus reducing its activity. Conversely, when nitrogen levels are low, the N-terminal adenylyl removase (AR) activates GlnA by removing the adenylyl group by phosphorolysis, increasing its activity. The regulatory region of GlnE binds the signal transduction protein PII (GlnB) which indicates the nitrogen status of the cell. This is Bifunctional glutamine synthetase adenylyltransferase/adenylyl-removing enzyme from Proteus mirabilis (strain HI4320).